The sequence spans 447 residues: Signal recognition particle 54 kDa protein (447 aa).

GTP-binding positions include 103 to 110 (GVQGSGKT), 185 to 189 (DTAGR), and 245 to 248 (TKMD).

It belongs to the GTP-binding SRP family. SRP54 subfamily. In terms of assembly, part of the signal recognition particle protein translocation system, which is composed of SRP and FtsY. Archaeal SRP consists of a 7S RNA molecule of 300 nucleotides and two protein subunits: SRP54 and SRP19.

It is found in the cytoplasm. It catalyses the reaction GTP + H2O = GDP + phosphate + H(+). Involved in targeting and insertion of nascent membrane proteins into the cytoplasmic membrane. Binds to the hydrophobic signal sequence of the ribosome-nascent chain (RNC) as it emerges from the ribosomes. The SRP-RNC complex is then targeted to the cytoplasmic membrane where it interacts with the SRP receptor FtsY. This Saccharolobus islandicus (strain L.S.2.15 / Lassen #1) (Sulfolobus islandicus) protein is Signal recognition particle 54 kDa protein.